The primary structure comprises 560 residues: Vesicular glutamate transporter 1 (560 aa).

Over 1 to 63 (MEFRQEEFRK…CTCFGLPRRY (63 aa)) the chain is Cytoplasmic. The helical transmembrane segment at 64-84 (IIAIMSGLGFCISFGIRCNLG) threads the bilayer. Over 85 to 116 (VAIVSMVNNSTTHRGGHVVMQKAQFNWDPETV) the chain is Extracellular. Residues 117 to 137 (GLIHGSFFWGYIVTQIPGGFI) form a helical membrane-spanning segment. At 138–140 (CQK) the chain is on the cytoplasmic side. The chain crosses the membrane as a helical span at residues 141-161 (FAANRVFGFAIVATSTLNMLI). Topologically, residues 162–169 (PSAARVHY) are extracellular. The helical transmembrane segment at 170–190 (GCVIFVRILQGLVEGVTYPAC) threads the bilayer. The Cytoplasmic segment spans residues 191 to 208 (HGIWSKWAPPLERSRLAT). Residues 209–229 (TAFCGSYAGAVVAMPLAGVLV) traverse the membrane as a helical segment. Topologically, residues 230–236 (QYSGWSS) are extracellular. Residues 237–257 (VFYVYGSFGIFWYLFWLLVSY) form a helical membrane-spanning segment. Residues 258 to 302 (ESPALHPSISEEERKYIEDAIGESAKLMNPVTKFNTPWRRFFTSM) lie on the Cytoplasmic side of the membrane. Residues 303–323 (PVYAIIVANFCRSWTFYLLLI) form a helical membrane-spanning segment. Residues 324-341 (SQPAYFEEVFGFEISKVG) lie on the Extracellular side of the membrane. A helical membrane pass occupies residues 342 to 362 (LVSALPHLVMTIIVPIGGQIA). Topologically, residues 363–378 (DFLRSRRIMSTTNVRK) are cytoplasmic. Residues 379-399 (LMNCGGFGMEATLLLVVGYSH) traverse the membrane as a helical segment. Residues 400-401 (SK) are Extracellular-facing. The helical transmembrane segment at 402-422 (GVAISFLVLAVGFSGFAISGF) threads the bilayer. The Cytoplasmic segment spans residues 423–435 (NVNHLDIAPRYAS). A helical membrane pass occupies residues 436 to 456 (ILMGISNGVGTLSGMVCPIIV). At 457–469 (GAMTKHKTREEWQ) the chain is on the extracellular side. A helical transmembrane segment spans residues 470–490 (YVFLIASLVHYGGVIFYGVFA). Topologically, residues 491 to 560 (SGEKQPWAEP…PRPPPPVRDY (70 aa)) are cytoplasmic. The segment at 497-560 (WAEPEEMSEE…PRPPPPVRDY (64 aa)) is disordered. The residue at position 504 (serine 504) is a Phosphoserine. Residues 520-529 (DESEMEDEAE) show a composition bias toward acidic residues. Composition is skewed to pro residues over residues 531–540 (PGAPPAPPPS) and 550–560 (PPRPPPPVRDY).

It belongs to the major facilitator superfamily. Sodium/anion cotransporter family. VGLUT subfamily. In terms of assembly, interacts with SHANK3.

It localises to the cytoplasmic vesicle. Its subcellular location is the secretory vesicle. It is found in the synaptic vesicle membrane. The protein localises to the cell membrane. The protein resides in the synapse. It localises to the synaptosome. The enzyme catalyses L-glutamate(out) = L-glutamate(in). It catalyses the reaction chloride(in) = chloride(out). It carries out the reaction 3 Na(+)(out) + phosphate(out) = 3 Na(+)(in) + phosphate(in). The catalysed reaction is phosphate(in) = phosphate(out). The enzyme catalyses K(+)(in) + H(+)(out) = K(+)(out) + H(+)(in). Its activity is regulated as follows. Chloride channel activity is allosterically activated by lumenal H(+) and Cl(-) leading to synaptic vesicles acidification. The L-glutamate transport activity is allosterically activated by lumenal H(+) and Cl(-). The allosteric activation by H(+) efficiently prevents non-vesicular efflux across the plasma membrane, thereby restricting L-glutamate transport activity to acidic membranes such as synaptic vesicles. Functionally, multifunctional transporter that transports L-glutamate as well as multiple ions such as chloride, proton, potassium, sodium and phosphate. At the synaptic vesicle membrane, mainly functions as an uniporter which transports preferentially L-glutamate but also phosphate from the cytoplasm into synaptic vesicles at presynaptic nerve terminals of excitatory neural cells. The L-glutamate or phosphate uniporter activity is electrogenic and is driven by the proton electrochemical gradient, mainly by the electrical gradient established by the vacuolar H(+)-ATPase across the synaptic vesicle membrane. In addition, functions as a chloride channel that allows a chloride permeation through the synaptic vesicle membrane that affects the proton electrochemical gradient and promotes synaptic vesicles acidification. Moreover, may function as a K(+)/H(+) antiport allowing to maintain the electrical gradient and to decrease chemical gradient and therefore sustain vesicular glutamate uptake. The vesicular K(+)/H(+) antiport activity is electroneutral. At the plasma membrane, following exocytosis, functions as a symporter of Na(+) and phosphate from the extracellular space to the cytoplasm allowing synaptic phosphate homeostasis regulation. The symporter activity is driven by an inside negative membrane potential and is electrogenic. Is necessary for synaptic signaling of visual-evoked responses from photoreceptors. This Bos taurus (Bovine) protein is Vesicular glutamate transporter 1.